The sequence spans 473 residues: Probable ribonuclease FAU-1 (473 aa).

Belongs to the FAU-1 family.

Functionally, probable RNase involved in rRNA stability through maturation and/or degradation of precursor rRNAs. Binds to RNA in loop regions with AU-rich sequences. The protein is Probable ribonuclease FAU-1 of Hyperthermus butylicus (strain DSM 5456 / JCM 9403 / PLM1-5).